The primary structure comprises 587 residues: Bifunctional dihydrofolate reductase-thymidylate synthase (587 aa).

A DHFR domain is found at 9–237; the sequence is DIYAICACCK…TTLDFIIYSK (229 aa). 36–42 provides a ligand contact to NADP(+); the sequence is GIGNAGV. Asp-51 is a substrate binding site. Residues 108–110 and 129–132 each bind NADP(+); these read KKS and LSRT. 3 residues coordinate substrate: Ile-173, Tyr-179, and Thr-194. An NADP(+)-binding site is contributed by 174-181; the sequence is GGSSVYKE. Residues 301–587 form a thymidylate synthase region; the sequence is NHPEYQYLNI…HDKINMDMAA (287 aa). DUMP is bound at residue Arg-324. The active site involves Cys-469. DUMP contacts are provided by residues His-470, 488–492, Asn-500, and 530–532; these read QRSCD and HVY.

The protein in the N-terminal section; belongs to the dihydrofolate reductase family. It in the C-terminal section; belongs to the thymidylate synthase family. In terms of assembly, homodimer.

The enzyme catalyses (6S)-5,6,7,8-tetrahydrofolate + NADP(+) = 7,8-dihydrofolate + NADPH + H(+). The catalysed reaction is dUMP + (6R)-5,10-methylene-5,6,7,8-tetrahydrofolate = 7,8-dihydrofolate + dTMP. It participates in cofactor biosynthesis; tetrahydrofolate biosynthesis; 5,6,7,8-tetrahydrofolate from 7,8-dihydrofolate: step 1/1. Functionally, bifunctional enzyme. Involved in de novo dTMP biosynthesis. Key enzyme in folate metabolism. Catalyzes an essential reaction for de novo glycine and purine synthesis, DNA precursor synthesis, and for the conversion of dUMP to dTMP. The chain is Bifunctional dihydrofolate reductase-thymidylate synthase from Plasmodium berghei (strain Anka).